Here is a 295-residue protein sequence, read N- to C-terminus: Cytidine deaminase (295 aa).

CMP/dCMP-type deaminase domains lie at 48-168 and 187-295; these read TDNQ…FGPS and EDDD…YLSL. 89 to 91 is a substrate binding site; sequence NME. His102 lines the Zn(2+) pocket. Glu104 serves as the catalytic Proton donor. Cys129 and Cys132 together coordinate Zn(2+).

This sequence belongs to the cytidine and deoxycytidylate deaminase family. As to quaternary structure, homodimer. The cofactor is Zn(2+).

It catalyses the reaction cytidine + H2O + H(+) = uridine + NH4(+). The catalysed reaction is 2'-deoxycytidine + H2O + H(+) = 2'-deoxyuridine + NH4(+). In terms of biological role, this enzyme scavenges exogenous and endogenous cytidine and 2'-deoxycytidine for UMP synthesis. This is Cytidine deaminase from Vibrio vulnificus (strain CMCP6).